The primary structure comprises 385 residues: UDP-4-amino-4-deoxy-L-arabinose--oxoglutarate aminotransferase (385 aa).

K188 acts as the Proton acceptor in catalysis. K188 is modified (N6-(pyridoxal phosphate)lysine).

This sequence belongs to the DegT/DnrJ/EryC1 family. ArnB subfamily. Homodimer. Pyridoxal 5'-phosphate is required as a cofactor.

The catalysed reaction is UDP-4-amino-4-deoxy-beta-L-arabinose + 2-oxoglutarate = UDP-beta-L-threo-pentopyranos-4-ulose + L-glutamate. The protein operates within nucleotide-sugar biosynthesis; UDP-4-deoxy-4-formamido-beta-L-arabinose biosynthesis; UDP-4-deoxy-4-formamido-beta-L-arabinose from UDP-alpha-D-glucuronate: step 2/3. Its pathway is bacterial outer membrane biogenesis; lipopolysaccharide biosynthesis. With respect to regulation, inhibited by L-cycloserine. Functionally, catalyzes the conversion of UDP-4-keto-arabinose (UDP-Ara4O) to UDP-4-amino-4-deoxy-L-arabinose (UDP-L-Ara4N). The modified arabinose is attached to lipid A and is required for resistance to polymyxin and cationic antimicrobial peptides. This is UDP-4-amino-4-deoxy-L-arabinose--oxoglutarate aminotransferase (arnB) from Salmonella typhimurium (strain LT2 / SGSC1412 / ATCC 700720).